The following is a 730-amino-acid chain: Replication restart protein PriA (730 aa).

The 167-residue stretch at 212–378 folds into the Helicase ATP-binding domain; it reads LLFHSGFNVW…QNGKYQHLVL (167 aa). Position 225 to 232 (225 to 232) interacts with ATP; the sequence is GVTGSGKT. A DEAH box motif is present at residues 321–324; sequence DEEH. Cys-437, Cys-440, Cys-446, Cys-449, Cys-464, Cys-467, Cys-477, and Cys-480 together coordinate Zn(2+). A Helicase C-terminal domain is found at 472–640; it reads TIPRQCGDCG…LPPFTFQALI (169 aa).

It belongs to the helicase family. PriA subfamily. Component of the replication restart primosome. Zn(2+) is required as a cofactor.

It carries out the reaction Couples ATP hydrolysis with the unwinding of duplex DNA by translocating in the 3'-5' direction.. The enzyme catalyses ATP + H2O = ADP + phosphate + H(+). In terms of biological role, initiates the restart of stalled replication forks, which reloads the replicative helicase on sites other than the origin of replication. Recognizes and binds to abandoned replication forks and remodels them to uncover a helicase loading site. Promotes assembly of the primosome at these replication forks. This Haemophilus influenzae (strain ATCC 51907 / DSM 11121 / KW20 / Rd) protein is Replication restart protein PriA.